The primary structure comprises 36 residues: Turgencin-A (36 aa).

3 disulfides stabilise this stretch: cysteine 8–cysteine 33, cysteine 12–cysteine 29, and cysteine 17–cysteine 26. A Methionine sulfoxide modification is found at methionine 10. Valine amide is present on valine 36.

Its subcellular location is the secreted. Has antimicrobial activity against Gram-positive bacteria (C.glutamicum ATCC 13032 (MIC=0.4 uM), B.subtilis ATCC 23857 (MIC=0.4 uM) and S.aureus ATCC 9144 (MIC=6.3 uM)) and Gram-negative bacteria (E.coli ATCC 25922 (MIC=0.8 uM) and P.aeruginosa ATCC 27853 (MIC=1.6 uM)). In Synoicum turgens (Colonial ascidian), this protein is Turgencin-A.